The sequence spans 678 residues: Protein KHNYN (678 aa).

The residue at position 10 (S10) is a Phosphoserine. Disordered regions lie at residues 222 to 251 and 347 to 407; these read QGVRAPPSDGRESLDTGSMGPGDCRGARGD and LHNG…ARGG. Pro residues predominate over residues 355–367; it reads PRVPSPPPAPEPP. S359 is subject to Phosphoserine. Residues 370–388 are compositionally biased toward basic and acidic residues; the sequence is CGDRGDCGDRGDVGDRGDK. The 153-residue stretch at 437–589 folds into the RNase NYN domain; it reads LRHIVIDGSN…LGRNGPTLDE (153 aa). The tract at residues 595 to 633 is disordered; that stretch reads ARTQGSSKAQHPSRGFAEHGKQQQGREEEKGSGGIRKTR. The span at 610–633 shows a compositional bias: basic and acidic residues; that stretch reads FAEHGKQQQGREEEKGSGGIRKTR.

This sequence belongs to the N4BP1 family.

This is Protein KHNYN (KHNYN) from Homo sapiens (Human).